A 357-amino-acid chain; its full sequence is Peptide chain release factor 1 (357 aa).

Glutamine 236 is subject to N5-methylglutamine.

It belongs to the prokaryotic/mitochondrial release factor family. Methylated by PrmC. Methylation increases the termination efficiency of RF1.

It localises to the cytoplasm. Peptide chain release factor 1 directs the termination of translation in response to the peptide chain termination codons UAG and UAA. The chain is Peptide chain release factor 1 from Mycobacterium avium (strain 104).